We begin with the raw amino-acid sequence, 443 residues long: Xaa-Pro dipeptidase (443 aa).

Mn(2+) is bound by residues aspartate 246, aspartate 257, histidine 339, glutamate 384, and glutamate 423.

This sequence belongs to the peptidase M24B family. Bacterial-type prolidase subfamily. Mn(2+) serves as cofactor.

It catalyses the reaction Xaa-L-Pro dipeptide + H2O = an L-alpha-amino acid + L-proline. Its function is as follows. Splits dipeptides with a prolyl residue in the C-terminal position. This chain is Xaa-Pro dipeptidase, found in Klebsiella pneumoniae (strain 342).